The sequence spans 424 residues: Serine--tRNA ligase (424 aa).

Position 232 to 234 (232 to 234 (TAE)) interacts with L-serine. 263-265 (RQE) contributes to the ATP binding site. Residue Glu286 participates in L-serine binding. Residue 350–353 (EIGS) participates in ATP binding. Ser386 lines the L-serine pocket.

Belongs to the class-II aminoacyl-tRNA synthetase family. Type-1 seryl-tRNA synthetase subfamily. In terms of assembly, homodimer. The tRNA molecule binds across the dimer.

The protein resides in the cytoplasm. It catalyses the reaction tRNA(Ser) + L-serine + ATP = L-seryl-tRNA(Ser) + AMP + diphosphate + H(+). The catalysed reaction is tRNA(Sec) + L-serine + ATP = L-seryl-tRNA(Sec) + AMP + diphosphate + H(+). Its pathway is aminoacyl-tRNA biosynthesis; selenocysteinyl-tRNA(Sec) biosynthesis; L-seryl-tRNA(Sec) from L-serine and tRNA(Sec): step 1/1. In terms of biological role, catalyzes the attachment of serine to tRNA(Ser). Is also able to aminoacylate tRNA(Sec) with serine, to form the misacylated tRNA L-seryl-tRNA(Sec), which will be further converted into selenocysteinyl-tRNA(Sec). The polypeptide is Serine--tRNA ligase (Aster yellows witches'-broom phytoplasma (strain AYWB)).